We begin with the raw amino-acid sequence, 149 residues long: Ricin B-like lectin (149 aa).

Residue S2 is modified to N-acetylserine. Residues D21, G24, N39, and N47 each coordinate a carbohydrate. Residues 110–112 form an involved in dimerization region; it reads PNL.

Homodimer. In terms of processing, the N-terminus is blocked.

Its function is as follows. Lectin specific for terminal, non-reducing N-acetylgalactosamine (Gal-NAc)-containing carbohydrates including N,N'-diacetyllactosediamine/LDN (GalNAcbeta1-4GlcNAc, LacdiNAc). Specific also for carbohydrates containing N-acetylglucosamine (-GlcNAc) or N-acetyllactosamine (-Galbeta1-4GlcNAc) at the reducing end. Agglutinates human blood group A, AB, B and O erythrocytes with a strong preference for group A. Agglutinates bovine erythrocytes with a very low specificity. Binds carbohydrates bivalently, which is required for its biological activity. Exhibits insecticidal activity against the fruit fly D.melanogaster, mosquito A.aegypti, and amoebozoa A.castellanii. Has anti-nutritional activity against Colorado potato beetle L.decemlineata, and against worm C.elegans. Has antiproliferative activity against human leukemic T-cells. Has an immunostimulatory effect on human antigen-presenting dendritic cells, which are subsequently able to induce efficient T-cell immune responses. This chain is Ricin B-like lectin, found in Clitocybe nebularis (Clouded agaric).